Consider the following 659-residue polypeptide: tRNA uridine 5-carboxymethylaminomethyl modification enzyme MnmG (659 aa).

Position 13-18 (13-18 (GGGHAG)) interacts with FAD. 281 to 295 (GPRYCPSVEDKINRF) provides a ligand contact to NAD(+).

It belongs to the MnmG family. As to quaternary structure, homodimer. Heterotetramer of two MnmE and two MnmG subunits. Requires FAD as cofactor.

It is found in the cytoplasm. In terms of biological role, NAD-binding protein involved in the addition of a carboxymethylaminomethyl (cmnm) group at the wobble position (U34) of certain tRNAs, forming tRNA-cmnm(5)s(2)U34. This is tRNA uridine 5-carboxymethylaminomethyl modification enzyme MnmG from Delftia acidovorans (strain DSM 14801 / SPH-1).